A 138-amino-acid polypeptide reads, in one-letter code: Large ribosomal subunit protein uL16 (138 aa).

Residues 1-16 are compositionally biased toward basic residues; sequence MLIPRRVKHRKQHHPG. Residues 1-24 are disordered; it reads MLIPRRVKHRKQHHPGRSGAATGG.

It belongs to the universal ribosomal protein uL16 family. As to quaternary structure, part of the 50S ribosomal subunit.

Functionally, binds 23S rRNA and is also seen to make contacts with the A and possibly P site tRNAs. This is Large ribosomal subunit protein uL16 from Paenarthrobacter aurescens (strain TC1).